We begin with the raw amino-acid sequence, 226 residues long: uncharacterized protein (226 aa).

2 disordered regions span residues 1-20 (MGAE…AVQT) and 205-226 (LDRK…QRDA).

This is an uncharacterized protein from Treponema pallidum (strain Nichols).